The primary structure comprises 428 residues: Cytochrome c biogenesis protein CcsB (428 aa).

A run of 3 helical transmembrane segments spans residues 14-34 (LKFA…GTFI), 72-92 (SLWF…CSFR), and 162-182 (IGPL…AYGS).

Belongs to the Ccs1/CcsB family. In terms of assembly, may interact with CcsA.

It localises to the cellular thylakoid membrane. Required during biogenesis of c-type cytochromes (cytochrome c6 and cytochrome f) at the step of heme attachment. The protein is Cytochrome c biogenesis protein CcsB of Prochlorococcus marinus (strain MIT 9301).